The chain runs to 616 residues: Membrane protein insertase YidC (616 aa).

A helical membrane pass occupies residues 9–29; that stretch reads ILAVILSGLVLIAWQYFYNVP. Positions 37–80 are disordered; that stretch reads QQQAQAELQKTTPQPTASATPGATPQSGGAAQPSTPAAGQQAQP. A compositionally biased stretch (polar residues) spans 44–71; the sequence is LQKTTPQPTASATPGATPQSGGAAQPST. 4 helical membrane passes run 388-408, 462-482, 520-540, and 559-579; these read FFGNFGISILLVTVIVKLLFF, LPVVIQIPVFFSLYKVLFVTI, VFGHYLALGIWPIIMGITMWF, and WMPLIFTFMLAGFPAGLVIYW.

It belongs to the OXA1/ALB3/YidC family. Type 1 subfamily. In terms of assembly, interacts with the Sec translocase complex via SecD. Specifically interacts with transmembrane segments of nascent integral membrane proteins during membrane integration.

It localises to the cell inner membrane. In terms of biological role, required for the insertion and/or proper folding and/or complex formation of integral membrane proteins into the membrane. Involved in integration of membrane proteins that insert both dependently and independently of the Sec translocase complex, as well as at least some lipoproteins. Aids folding of multispanning membrane proteins. The sequence is that of Membrane protein insertase YidC from Bradyrhizobium diazoefficiens (strain JCM 10833 / BCRC 13528 / IAM 13628 / NBRC 14792 / USDA 110).